Here is a 495-residue protein sequence, read N- to C-terminus: Cytochrome P450 94C1 (495 aa).

Residues L2–H22 traverse the membrane as a helical segment. Position 439 (C439) interacts with heme.

Belongs to the cytochrome P450 family. Requires heme as cofactor.

The protein localises to the membrane. It localises to the endoplasmic reticulum membrane. The enzyme catalyses a 12-hydroxyjasmonyl-L-alpha-amino acid + 2 reduced [NADPH--hemoprotein reductase] + 2 O2 = a 12-hydroxy-12-oxojasmonyl-L-alpha-amino acid + 2 oxidized [NADPH--hemoprotein reductase] + 3 H2O + 3 H(+). Involved in the oxidation of the plant hormone jasmonoyl-L-isoleucine (JA-Ile), a bioactive phytohormone of the jasmonate-mediated signaling pathway. Converts 12-hydroxy-JA-Ile (12OH-JA-Ile) to the carboxy-derivative 12COOH-JA-Ile. Exerts negative feedback control on JA-Ile levels and plays a role in attenuation of jasmonate responses. Also functions as in-chain fatty acids hydroxylase in vitro. Catalyzes the hydroxylation of 12-hydroxy-jasmonoyl-L-phenylalanine (12OH-JA-Phe) in vitro. Converts 12OH-JA-Phe to the carboxy-derivative 12COOH-JA-Phe. The chain is Cytochrome P450 94C1 from Arabidopsis thaliana (Mouse-ear cress).